We begin with the raw amino-acid sequence, 290 residues long: Signal recognition particle receptor FtsY (290 aa).

GTP contacts are provided by residues 91–98 (GTNGSGKT), 173–177 (DTSGR), and 237–240 (TKVD).

Belongs to the GTP-binding SRP family. FtsY subfamily. As to quaternary structure, part of the signal recognition particle protein translocation system, which is composed of SRP and FtsY.

The protein resides in the cell inner membrane. Its subcellular location is the cytoplasm. The enzyme catalyses GTP + H2O = GDP + phosphate + H(+). Its function is as follows. Involved in targeting and insertion of nascent membrane proteins into the cytoplasmic membrane. Acts as a receptor for the complex formed by the signal recognition particle (SRP) and the ribosome-nascent chain (RNC). The protein is Signal recognition particle receptor FtsY of Chlamydia pneumoniae (Chlamydophila pneumoniae).